The chain runs to 378 residues: Chlorophyll synthase, chloroplastic (378 aa).

Residues 1 to 45 constitute a chloroplast transit peptide; it reads MATSHPLAAAAATSSSSATFRPPLRFLSSPPSSLTLNRRRSFPVV. Transmembrane regions (helical) follow at residues 173-193, 199-219, 232-252, 257-277, 302-322, 327-347, and 357-377; these read VITQ…LLDI, FPII…YSAP, FALG…LFGT, IVVL…VNDF, WICV…LLST, YALA…QYFL, and YQAS…LATS.

The protein belongs to the UbiA prenyltransferase family. Chlorophyll synthase subfamily. Mg(2+) serves as cofactor. It depends on Zn(2+) as a cofactor. The cofactor is Mn(2+).

The protein resides in the plastid. The protein localises to the chloroplast membrane. It catalyses the reaction phytyl diphosphate + chlorophyllide a + H(+) = chlorophyll a + diphosphate. Its activity is regulated as follows. Inhibited by N-phenylmaleimide (NPM) and diacetyl. In terms of biological role, involved in one of the last steps of the biosynthesis of chlorophyll a. Catalyzes the esterification of chlorophillide a with either geranylgeranyldiphosphate (GGPP) or phytyldiphosphate (PhyPP). May also use with a lower efficiency the monophosphates GGMP and PhyMP, but not the non-phosphorylated alcohols geranylgeraniol and phytol. The tetraprenyl diphosphate must bind to the enzyme as the first substrate and esterification occurs when this pre-loaded enzyme meets the second substrate, chlorophyllide. This is Chlorophyll synthase, chloroplastic (CHLG) from Avena sativa (Oat).